The sequence spans 410 residues: Lysosome-associated membrane glycoprotein 2 (410 aa).

An N-terminal signal peptide occupies residues 1-28 (MVCFRLFPVPGSGLVLVCLVLGAVRSYA). A first lumenal domain region spans residues 29-192 (LELNLTDSEN…STNEFLCDKD (164 aa)). The Lumenal segment spans residues 29–375 (LELNLTDSEN…QDCSADDDNF (347 aa)). Residues Asn32 and Asn38 are each glycosylated (N-linked (GlcNAc...) (polylactosaminoglycan) asparagine). Cys41 and Cys79 are joined by a disulfide. 6 N-linked (GlcNAc...) asparagine glycosylation sites follow: Asn49, Asn58, Asn75, Asn101, Asn123, and Asn179. Residues Cys153 and Cys189 are joined by a disulfide bond. A hinge region spans residues 193–228 (KTSTVAPTIHTTVPSPTTTPTPKEKPEAGTYSVNNG). Residue Ser195 is glycosylated (O-linked (GalNAc...) serine). Thr196, Thr200, Thr203, and Thr204 each carry an O-linked (GalNAc...) threonine glycan. Residues 199-213 (PTIHTTVPSPTTTPT) are compositionally biased toward low complexity. The interval 199–221 (PTIHTTVPSPTTTPTPKEKPEAG) is disordered. An O-linked (GalNAc...) serine; partial glycan is attached at Ser207. Thr209 is a glycosylation site (O-linked (GalNAc...) threonine; partial). Thr210 and Thr211 each carry an O-linked (GalNAc...) threonine glycan. Residue Thr213 is glycosylated (O-linked (GalNAc...) threonine; partial). Residues Asn229, Asn242, Asn257, Asn275, and Asn300 are each glycosylated (N-linked (GlcNAc...) asparagine). The second lumenal domain stretch occupies residues 229–375 (NDTCLLATMG…QDCSADDDNF (147 aa)). Cys232 and Cys265 are disulfide-bonded. Asn307 carries an N-linked (GlcNAc...) (polylactosaminoglycan) asparagine glycan. 2 N-linked (GlcNAc...) asparagine glycosylation sites follow: Asn317 and Asn356. Cys331 and Cys368 form a disulfide bridge. Residues 376 to 399 (LVPIAVGAALAGVLILVLLAYFIG) traverse the membrane as a helical segment. The Cytoplasmic portion of the chain corresponds to 400-410 (LKHHHAGYEQF). The important for binding and subsequent lysosomal degradation of target proteins stretch occupies residues 401–404 (KHHH).

This sequence belongs to the LAMP family. In terms of assembly, monomer. Homodimer. Homotrimer. Forms large homooligomers. Interacts (via its cytoplasmic region) with HSPA8; HSPA8 mediates recruitment of proteins with a KFERQ motif to the surface of the lysosome for chaperone-mediated autophagy. Interacts with HSP90 in the lysosome lumen; this enhances LAMP2 stability. Interacts with MLLT11. Interacts with ABCB9. Interacts with FURIN. Interacts with CT55; this interaction may be important for LAMP2 protein stability. Interacts with TMEM175; inhibiting the proton channel activity of TMEM175. Forms a ternary complex with RAB7A and RUFY4 (via RUN domain); the interaction with RAB7A is mediated by RUFY4 (via RUN and coiled coil domains). As to quaternary structure, (Microbial infection) Interacts with mumps virus protein F; this interaction promotes protein F cleavage by FURIN. Post-translationally, O- and N-glycosylated; some of the 16 N-linked glycans are polylactosaminoglycans. In terms of tissue distribution, isoform LAMP-2A is highly expressed in placenta, lung and liver, less in kidney and pancreas, low in brain and skeletal muscle. Isoform LAMP-2B is detected in spleen, thymus, prostate, testis, small intestine, colon, skeletal muscle, brain, placenta, lung, kidney, ovary and pancreas and liver. Isoform LAMP-2C is detected in small intestine, colon, heart, brain, skeletal muscle, and at lower levels in kidney and placenta.

The protein resides in the lysosome membrane. It is found in the endosome membrane. It localises to the cell membrane. Its subcellular location is the cytoplasmic vesicle. The protein localises to the autophagosome membrane. Its function is as follows. Lysosomal membrane glycoprotein which plays an important role in lysosome biogenesis, lysosomal pH regulation and autophagy. Acts as an important regulator of lysosomal lumen pH regulation by acting as a direct inhibitor of the proton channel TMEM175, facilitating lysosomal acidification for optimal hydrolase activity. Plays an important role in chaperone-mediated autophagy, a process that mediates lysosomal degradation of proteins in response to various stresses and as part of the normal turnover of proteins with a long biological half-live. Functions by binding target proteins, such as GAPDH, NLRP3 and MLLT11, and targeting them for lysosomal degradation. In the chaperone-mediated autophagy, acts downstream of chaperones, such as HSPA8/HSC70, which recognize and bind substrate proteins and mediate their recruitment to lysosomes, where target proteins bind LAMP2. Plays a role in lysosomal protein degradation in response to starvation. Required for the fusion of autophagosomes with lysosomes during autophagy. Cells that lack LAMP2 express normal levels of VAMP8, but fail to accumulate STX17 on autophagosomes, which is the most likely explanation for the lack of fusion between autophagosomes and lysosomes. Required for normal degradation of the contents of autophagosomes. Required for efficient MHC class II-mediated presentation of exogenous antigens via its function in lysosomal protein degradation; antigenic peptides generated by proteases in the endosomal/lysosomal compartment are captured by nascent MHC II subunits. Is not required for efficient MHC class II-mediated presentation of endogenous antigens. In terms of biological role, modulates chaperone-mediated autophagy. Decreases presentation of endogenous antigens by MHCII. Does not play a role in the presentation of exogenous and membrane-derived antigens by MHCII. Functionally, (Microbial infection) Supports the FURIN-mediated cleavage of mumps virus fusion protein F by interacting with both FURIN and the unprocessed form but not the processed form of the viral protein F. This chain is Lysosome-associated membrane glycoprotein 2 (LAMP2), found in Homo sapiens (Human).